The sequence spans 153 residues: Cytochrome c-type biogenesis protein CcmE (153 aa).

Over 1–8 (MATRRGRR) the chain is Cytoplasmic. Residues 9–29 (ALLIAGGVGLLALAAALVLNA) traverse the membrane as a helical; Signal-anchor for type II membrane protein segment. Topologically, residues 30 to 153 (LRSNLVFFFS…PSATLQTEAR (124 aa)) are periplasmic. Heme is bound by residues His-124 and Tyr-128.

The protein belongs to the CcmE/CycJ family.

The protein localises to the cell inner membrane. Its function is as follows. Heme chaperone required for the biogenesis of c-type cytochromes. Transiently binds heme delivered by CcmC and transfers the heme to apo-cytochromes in a process facilitated by CcmF and CcmH. The sequence is that of Cytochrome c-type biogenesis protein CcmE from Bordetella bronchiseptica (strain ATCC BAA-588 / NCTC 13252 / RB50) (Alcaligenes bronchisepticus).